Consider the following 214-residue polypeptide: Putative 3-methyladenine DNA glycosylase (214 aa).

This sequence belongs to the DNA glycosylase MPG family.

This is Putative 3-methyladenine DNA glycosylase from Mycobacterium leprae (strain Br4923).